A 73-amino-acid polypeptide reads, in one-letter code: Toxin Td7 (73 aa).

An N-terminal signal peptide occupies residues 1–7; the sequence is IGMAVEC. Residues 8–70 form the LCN-type CS-alpha/beta domain; the sequence is KDGYLVGADG…VWDSATNRCG (63 aa). Disulfide bonds link Cys-18-Cys-69, Cys-22-Cys-44, Cys-30-Cys-50, and Cys-34-Cys-52. The residue at position 71 (Lys-71) is a Lysine amide.

Belongs to the long (4 C-C) scorpion toxin superfamily. Sodium channel inhibitor family. Beta subfamily. As to expression, expressed by the venom gland.

It localises to the secreted. In terms of biological role, beta toxins bind voltage-independently at site-4 of sodium channels (Nav) and shift the voltage of activation toward more negative potentials thereby affecting sodium channel activation and promoting spontaneous and repetitive firing. The protein is Toxin Td7 of Tityus discrepans (Venezuelan scorpion).